A 116-amino-acid chain; its full sequence is Protein Rev (116 aa).

Residues Ser-5 and Ser-8 each carry the phosphoserine; by host CK2 modification. A homomultimerization region spans residues 18 to 26; the sequence is YIKILYQSN. The interval 26–48 is disordered; sequence NPYPKPEGTRQARRNRRRRWRAR. The Nuclear localization signal and RNA-binding (RRE) signature appears at 34–50; it reads TRQARRNRRRRWRARQR. Over residues 36–48 the composition is skewed to basic residues; the sequence is QARRNRRRRWRAR. Residues 73–84 carry the Nuclear export signal and binding to XPO1 motif; sequence LQLPPLERLHIN. Positions 89-116 are disordered; the sequence is CGQGAEEGVGSSQISGESHTVLGSGTKE. Over residues 98-116 the composition is skewed to polar residues; that stretch reads GSSQISGESHTVLGSGTKE. Ser-99 is subject to Phosphoserine; by host.

This sequence belongs to the HIV-1 REV protein family. As to quaternary structure, homomultimer; when bound to the RRE. Multimeric assembly is essential for activity and may involve XPO1. Binds to human KPNB1, XPO1, TNPO1, RANBP5 and IPO7. Interacts with the viral Integrase. Interacts with human KHDRBS1. Interacts with human NAP1; this interaction decreases Rev multimerization and stimulates its activity. Interacts with human DEAD-box helicases DDX3 and DDX24; these interactions may serve for viral RNA export to the cytoplasm and packaging, respectively. Interacts with human PSIP1; this interaction may inhibit HIV-1 DNA integration by promoting dissociation of the Integrase-LEDGF/p75 complex. In terms of processing, asymmetrically arginine dimethylated at one site by host PRMT6. Methylation impairs the RNA-binding activity and export of viral RNA from the nucleus to the cytoplasm. Phosphorylated by protein kinase CK2. Presence of, and maybe binding to the N-terminus of the regulatory beta subunit of CK2 is necessary for CK2-mediated Rev's phosphorylation.

It localises to the host nucleus. Its subcellular location is the host nucleolus. The protein localises to the host cytoplasm. Functionally, escorts unspliced or incompletely spliced viral pre-mRNAs (late transcripts) out of the nucleus of infected cells. These pre-mRNAs carry a recognition sequence called Rev responsive element (RRE) located in the env gene, that is not present in fully spliced viral mRNAs (early transcripts). This function is essential since most viral proteins are translated from unspliced or partially spliced pre-mRNAs which cannot exit the nucleus by the pathway used by fully processed cellular mRNAs. Rev itself is translated from a fully spliced mRNA that readily exits the nucleus. Rev's nuclear localization signal (NLS) binds directly to KPNB1/Importin beta-1 without previous binding to KPNA1/Importin alpha-1. KPNB1 binds to the GDP bound form of RAN (Ran-GDP) and targets Rev to the nucleus. In the nucleus, the conversion from Ran-GDP to Ran-GTP dissociates Rev from KPNB1 and allows Rev's binding to the RRE in viral pre-mRNAs. Rev multimerization on the RRE via cooperative assembly exposes its nuclear export signal (NES) to the surface. Rev can then form a complex with XPO1/CRM1 and Ran-GTP, leading to nuclear export of the complex. Conversion from Ran-GTP to Ran-GDP mediates dissociation of the Rev/RRE/XPO1/RAN complex, so that Rev can return to the nucleus for a subsequent round of export. Beside KPNB1, also seems to interact with TNPO1/Transportin-1, RANBP5/IPO5 and IPO7/RANBP7 for nuclear import. The nucleoporin-like HRB/RIP is an essential cofactor that probably indirectly interacts with Rev to release HIV RNAs from the perinuclear region to the cytoplasm. The protein is Protein Rev of Homo sapiens (Human).